Consider the following 203-residue polypeptide: Small ribosomal subunit protein uS4 (203 aa).

The S4 RNA-binding domain maps to 93–156 (RRLDNVVYRL…MKVPAILEAV (64 aa)).

It belongs to the universal ribosomal protein uS4 family. Part of the 30S ribosomal subunit. Contacts protein S5. The interaction surface between S4 and S5 is involved in control of translational fidelity.

In terms of biological role, one of the primary rRNA binding proteins, it binds directly to 16S rRNA where it nucleates assembly of the body of the 30S subunit. With S5 and S12 plays an important role in translational accuracy. The polypeptide is Small ribosomal subunit protein uS4 (Streptococcus equi subsp. equi (strain 4047)).